Here is a 291-residue protein sequence, read N- to C-terminus: ATP synthase gamma chain (291 aa).

Belongs to the ATPase gamma chain family. In terms of assembly, F-type ATPases have 2 components, CF(1) - the catalytic core - and CF(0) - the membrane proton channel. CF(1) has five subunits: alpha(3), beta(3), gamma(1), delta(1), epsilon(1). CF(0) has three main subunits: a, b and c.

It localises to the cell inner membrane. Produces ATP from ADP in the presence of a proton gradient across the membrane. The gamma chain is believed to be important in regulating ATPase activity and the flow of protons through the CF(0) complex. The sequence is that of ATP synthase gamma chain from Persephonella marina (strain DSM 14350 / EX-H1).